Here is a 189-residue protein sequence, read N- to C-terminus: Elongation factor P (189 aa).

The protein belongs to the elongation factor P family.

The protein localises to the cytoplasm. The protein operates within protein biosynthesis; polypeptide chain elongation. Functionally, involved in peptide bond synthesis. Stimulates efficient translation and peptide-bond synthesis on native or reconstituted 70S ribosomes in vitro. Probably functions indirectly by altering the affinity of the ribosome for aminoacyl-tRNA, thus increasing their reactivity as acceptors for peptidyl transferase. This Onion yellows phytoplasma (strain OY-M) protein is Elongation factor P.